The following is a 314-amino-acid chain: Bifunctional pinoresinol-lariciresinol reductase (314 aa).

NADP(+) contacts are provided by residues 10–16, R35, and K44; that span reads GGTGYIG. The active-site Proton acceptor is the K138. Residue R142 coordinates NADP(+). Residue H270 coordinates substrate.

This sequence belongs to the NmrA-type oxidoreductase family. Isoflavone reductase subfamily. In terms of assembly, dimer.

It catalyses the reaction (+)-lariciresinol + NADP(+) = (+)-pinoresinol + NADPH + H(+). The enzyme catalyses (+)-secoisolariciresinol + NADP(+) = (-)-lariciresinol + NADPH + H(+). In terms of biological role, reductase involved in the lignan justicidin B biosynthesis. Catalyzes the enantioselective conversion of (+)-pinoresinol into (+)-lariciresinol and of (-)-lariciresinol into (+)-secoisolariciresinol. Low activity with the other enantiomers. Abstracts the 4R-hydride from the NADPH cofactor during catalysis. This chain is Bifunctional pinoresinol-lariciresinol reductase (PLR_Lp1), found in Linum perenne (Perennial flax).